The following is a 323-amino-acid chain: Cysteine synthase A (323 aa).

The hydrogen sulfide site is built by asparagine 8 and arginine 35. Residue lysine 42 is modified to N6-(pyridoxal phosphate)lysine. Residues asparagine 72 and 177–181 (GTGGT) each bind pyridoxal 5'-phosphate. Leucine 269 is a binding site for hydrogen sulfide. Serine 273 lines the pyridoxal 5'-phosphate pocket.

It belongs to the cysteine synthase/cystathionine beta-synthase family. Homodimer. Requires pyridoxal 5'-phosphate as cofactor.

It carries out the reaction O-acetyl-L-serine + hydrogen sulfide = L-cysteine + acetate. The protein operates within amino-acid biosynthesis; L-cysteine biosynthesis; L-cysteine from L-serine: step 2/2. The chain is Cysteine synthase A (cysK) from Escherichia coli O157:H7.